A 336-amino-acid chain; its full sequence is Terephthalate 1,2-dioxygenase, reductase component 1 (336 aa).

Residues 3-91 (HQIHIHDSDI…DIRIQPSSFR (89 aa)) form the 2Fe-2S ferredoxin-type domain. [2Fe-2S] cluster is bound by residues Cys37, Cys42, Cys45, and Cys75. An FAD-binding FR-type domain is found at 98 to 197 (RKRFTAKVYS…ELPFGSIALK (100 aa)).

As to quaternary structure, monomer. Part of a multicomponent enzyme system composed of a reductase (TphA1I or TphA1II) and a two-subunit oxygenase component (TphA2I or TphA2II and TphA3I or TphA3II). FAD is required as a cofactor. It depends on [2Fe-2S] cluster as a cofactor.

It catalyses the reaction terephthalate + NADH + O2 + H(+) = (3S,4R)-3,4-dihydroxycyclohexa-1,5-diene-1,4-dicarboxylate + NAD(+). Functionally, component of the terephthalate 1,2-dioxygenase multicomponent enzyme system which catalyzes the dioxygenation of terephthalate (TER/TPA) to 1,2-dihydroxy-3,5-cyclohexadiene-1,4-dicarboxylic acid (DCD). TphA1 probably reduces TphA2A3. It can also use 2,5-dicarboxypyridine (PDC) and 1,4-napthalenedicarboxylic acid (NDC) as substrates, and preferentially uses NADPH which is the physiological electron donor. The polypeptide is Terephthalate 1,2-dioxygenase, reductase component 1 (tphA1I) (Comamonas sp).